The primary structure comprises 312 residues: Ribosomal protein L11 methyltransferase (312 aa).

Residues T162, G183, D205, and N248 each contribute to the S-adenosyl-L-methionine site.

This sequence belongs to the methyltransferase superfamily. PrmA family.

It localises to the cytoplasm. It carries out the reaction L-lysyl-[protein] + 3 S-adenosyl-L-methionine = N(6),N(6),N(6)-trimethyl-L-lysyl-[protein] + 3 S-adenosyl-L-homocysteine + 3 H(+). Methylates ribosomal protein L11. The protein is Ribosomal protein L11 methyltransferase of Bacillus cereus (strain ATCC 10987 / NRS 248).